Consider the following 471-residue polypeptide: FAD-dependent monooxygenase andE (471 aa).

The FAD site is built by glutamate 35, glycine 49, and arginine 108. Residue tyrosine 216 is part of the active site. FAD contacts are provided by aspartate 308 and alanine 321. The next 2 membrane-spanning stretches (helical) occupy residues 403 to 423 (LANISSMLIANGEIIQYLPFP) and 443 to 463 (TPFALFSAILLVQHVVPLLGL).

Belongs to the paxM FAD-dependent monooxygenase family. FAD serves as cofactor.

Its subcellular location is the membrane. It participates in secondary metabolite biosynthesis; terpenoid biosynthesis. FAD-dependent monooxygenase; part of the gene cluster that mediates the biosynthesis of anditomin, a fungal meroterpenoid. The first step of the pathway is the synthesis of 3,5-dimethylorsellinic acid (DMOA) by the polyketide synthase andM. DMOA is then converted to the phthalide compound 5,7-dihydroxy-4,6-dimethylphthalide (DHDMP) by the cytochrome P450 monooxygenase andK, which is further prenylated by the prenyltransferase andD to yield farnesyl-DHDMP. Further epoxidation by the FAD-dependent monooxygenase andE leads to epoxyfarnesyl-DHDMP. The next step involves the terpene cyclase andB that converts epoxyfarnesyl-DHDMP into preandiloid A through opening of the epoxide ring followed by the cyclization of the farnesyl moiety. Preandiloid A is in turn oxidized at the C-3 hydroxyl group to yield preandiloid B by the dehydrogenase andC. The dioxygenase andA is solely responsible for the dehydrogenation of preandiloid B leading to the enone preandiloid C, as well as for the intriguing structural rearrangement to generate the bicyclo[2.2.2]octane core, transforming preandiloid C into andiconin. FAD-binding monooxygenase andJ then produces andilesin D which is reduced by dehydrogenase andI to yield andilesin A. Action of acetyltransferase andG followed by a spontaneous acetate elimination leads then to andilesin B, which is in turn substrate of the short chain dehydrogenase andH to yield andilesin C. Finally, the dioxygenase andF catalyzes the transformation of andilesin C to anditomin. This is FAD-dependent monooxygenase andE from Emericella variicolor (Aspergillus stellatus).